A 385-amino-acid polypeptide reads, in one-letter code: 3-dehydroquinate synthase (385 aa).

NAD(+) contacts are provided by residues 122 to 126 (GVIGD), 146 to 147 (TT), Lys-159, and Lys-168. The Zn(2+) site is built by Glu-201, His-264, and His-282.

It belongs to the sugar phosphate cyclases superfamily. Dehydroquinate synthase family. Co(2+) serves as cofactor. Zn(2+) is required as a cofactor. The cofactor is NAD(+).

Its subcellular location is the cytoplasm. It carries out the reaction 7-phospho-2-dehydro-3-deoxy-D-arabino-heptonate = 3-dehydroquinate + phosphate. It functions in the pathway metabolic intermediate biosynthesis; chorismate biosynthesis; chorismate from D-erythrose 4-phosphate and phosphoenolpyruvate: step 2/7. In terms of biological role, catalyzes the conversion of 3-deoxy-D-arabino-heptulosonate 7-phosphate (DAHP) to dehydroquinate (DHQ). This is 3-dehydroquinate synthase from Rhodospirillum rubrum (strain ATCC 11170 / ATH 1.1.1 / DSM 467 / LMG 4362 / NCIMB 8255 / S1).